Consider the following 425-residue polypeptide: Voltage-dependent calcium channel gamma-8 subunit (425 aa).

Transmembrane regions (helical) follow at residues 19-39, 129-149, 158-178, and 208-228; these read VQVL…TIAI, SIFP…VAAS, IILG…IGVI, and FGGL…NIYI. Residues S252 and S255 each carry the phosphoserine modification. A disordered region spans residues 272–304; sequence RRSRSSSRSSEPSPSRDASPGGPGGPGFASTDI. Low complexity predominate over residues 277–287; sequence SSRSSEPSPSR. Residues 318–338 traverse the membrane as a helical segment; that stretch reads VAAGLAGAGGGGGGAVGAFGG. The segment covering 343–354 has biased composition (gly residues); that stretch reads AGGGGGGGGGAG. 2 disordered regions span residues 343-365 and 377-425; these read AGGG…ASGF and GGGV…TTPV. Pro residues predominate over residues 387–401; it reads PPAPPAPAPPAPSAP. Residues 412–425 are compositionally biased toward polar residues; that stretch reads ASNTNTLNRKTTPV.

It belongs to the PMP-22/EMP/MP20 family. CACNG subfamily. As to quaternary structure, interacts with CACNA1C. Identified in a complex with the L-type calcium channel subunits CACNA1C, CACNA2D1 and either CACNB1 or CACNB2. Acts as an auxiliary subunit for AMPA-selective glutamate receptors (AMPARs). Found in a complex with GRIA1, GRIA2, GRIA3, GRIA4, CNIH2, CNIH3, CACNG2, CACNG3, CACNG4, CACNG5 and CACNG7. Interacts with CNIH2. Found in a complex with GRIA1, GRIA2, GRIA3, GRIA4, DLG4 and CNIH2. Palmitoylated. Probably palmitoylated by ZDHHC3 and ZDHHC7. As to expression, detected in heart left ventricle.

Its subcellular location is the cell membrane. It is found in the postsynaptic density membrane. Regulates the activity of L-type calcium channels that contain CACNA1C as pore-forming subunit. Regulates the trafficking and gating properties of AMPA-selective glutamate receptors (AMPARs). Promotes their targeting to the cell membrane and synapses and modulates their gating properties by slowing their rates of activation, deactivation and desensitization and by mediating their resensitization. Does not show subunit-specific AMPA receptor regulation and regulates all AMPAR subunits. This Homo sapiens (Human) protein is Voltage-dependent calcium channel gamma-8 subunit.